The chain runs to 687 residues: MSAQFITPKKRPHSPLDSNELLPSFEDPQDMINAVVSTLSAPEEKTNVSIAYANEKNQATEIQAYAKIAGKDWTFYVKSLAVSIGRNIELSAPSNTNITTPLIDIDLGPAKVVSRSHAAITYNLDLRCWELKVLGRNGARIDGQKVNVDSPNVNALHSGAILDIGGTQMMFILPDAPAVVAPKMLEKCLLRYKEQQQQQNKRISSGPGIGGSTSFQMFDKAHLTHSPSSISANSLQSNLDQDLSKEEAKDIKPPYSYATMITQAILSNPQGVMSLSEIYNWIADHYAYYKYSKTGWQNSIRHNLSLNKAFEKVPRRPNEPGKGMKWQISESYKEEFLNKISDGTISKTRRGSSVSRQLSLHLATHNQLPESHKYTMDQQIHNGTAASIPQQQKQQQQQQKRPPQQQNSQPHLSQPHYTIPSNPMQTNSMGYIPQSNIYNMSNSDRRYTPYQQSQNPLMYQHQQQHIGQTYNQLGRPQGQLGQPMMQPQQQSYTSSNIKTEPSSPKRNPSISNNTPKMAKGTVSTESHSRSTSYTTTQLHEMSNFNSSANDSTSTAPTASTTTNGDIGLNFASPKKITALEAYTPERGSKGNPSGTNNNNNTNNTNTNTTNNNNGKNTAGGPNTNQSSPAFWNFVQFSTPNGQSPVRKSSEEVGNNSPTLNRKIKRERENDETNSPFKKKQRTEMIDS.

The disordered stretch occupies residues Met-1 to Pro-23. Positions Val-82–Val-146 constitute an FHA domain. Positions Ser-226–Gln-241 are enriched in polar residues. Positions Ser-226–Glu-246 are disordered. Positions Lys-252–Arg-350 form a DNA-binding region, fork-head. Disordered regions lie at residues Ala-385–Pro-449, Gln-472–Asn-569, and Pro-584–Ser-687. Positions Pro-389–Pro-410 are enriched in low complexity. Over residues His-411 to Asn-442 the composition is skewed to polar residues. Positions Gln-472–Gln-490 are enriched in low complexity. Polar residues predominate over residues Ser-491–Glu-540. 2 stretches are compositionally biased toward low complexity: residues Ser-542 to Asn-563 and Lys-589 to Asn-624. Residues Gln-625 to Leu-659 show a composition bias toward polar residues. Residues Ile-663 to Asp-670 carry the Nuclear localization signal motif.

The protein localises to the nucleus. Its function is as follows. Transcription factor required for the morphogenesis of true hyphal as well as yeast cells. Contributes to virulence. This is Fork-head transcriptional regulator 2 (FKH2) from Candida albicans (strain SC5314 / ATCC MYA-2876) (Yeast).